Consider the following 357-residue polypeptide: DNA integrity scanning protein DisA (357 aa).

The DAC domain maps to V8–I146. ATP-binding positions include G75, L93, and M106–T110.

Belongs to the DisA family. As to quaternary structure, homooctamer. Mg(2+) serves as cofactor.

It catalyses the reaction 2 ATP = 3',3'-c-di-AMP + 2 diphosphate. Functionally, participates in a DNA-damage check-point that is active prior to asymmetric division when DNA is damaged. DisA forms globular foci that rapidly scan along the chromosomes during sporulation, searching for lesions. When a lesion is present, DisA pauses at the lesion site. This triggers a cellular response that culminates in a temporary block in sporulation initiation. Its function is as follows. Also has diadenylate cyclase activity, catalyzing the condensation of 2 ATP molecules into cyclic di-AMP (c-di-AMP). c-di-AMP acts as a signaling molecule that couples DNA integrity with progression of sporulation. The rise in c-di-AMP level generated by DisA while scanning the chromosome, operates as a positive signal that advances sporulation; upon encountering a lesion, the DisA focus arrests at the damaged site and halts c-di-AMP synthesis. The sequence is that of DNA integrity scanning protein DisA from Bacillus cereus (strain ATCC 14579 / DSM 31 / CCUG 7414 / JCM 2152 / NBRC 15305 / NCIMB 9373 / NCTC 2599 / NRRL B-3711).